The primary structure comprises 715 residues: Polyribonucleotide nucleotidyltransferase (715 aa).

The Mg(2+) site is built by D489 and D495. The KH domain occupies 556-615; the sequence is PRIETLRIPTEKIREVIGTGGKVIREICEKTGAKINIEDDGTVKVASSDGNSIKAAINWI. Residues 625–693 form the S1 motif domain; it reads GHIYDGTVVK…DRGKVRLSMR (69 aa).

It belongs to the polyribonucleotide nucleotidyltransferase family. The cofactor is Mg(2+).

The protein resides in the cytoplasm. The catalysed reaction is RNA(n+1) + phosphate = RNA(n) + a ribonucleoside 5'-diphosphate. Involved in mRNA degradation. Catalyzes the phosphorolysis of single-stranded polyribonucleotides processively in the 3'- to 5'-direction. The polypeptide is Polyribonucleotide nucleotidyltransferase (Beijerinckia indica subsp. indica (strain ATCC 9039 / DSM 1715 / NCIMB 8712)).